The primary structure comprises 953 residues: Anion exchange protein 4 (953 aa).

Residues 20–41 are disordered; it reads SEQLDGDLGPGSGLDGPSDIDN. Transmembrane regions (helical) follow at residues 385–405, 413–433, 470–490, and 501–521; these read AVLY…GLLG, GVLE…LMAG, VGIW…SLLV, and FCAL…LNLI. Positions 385–953 are membrane (anion exchange); sequence AVLYIYLATV…KAPEINISVN (569 aa). Asparagine 546 and asparagine 570 each carry an N-linked (GlcNAc...) asparagine glycan. 7 helical membrane passes run 594-614, 635-655, 682-702, 728-748, 785-805, 807-827, and 869-889; these read VPDI…CAIA, FSSV…GLAT, PWWL…LIFM, LFCV…WYVS, GLVV…LKFI, MPVL…SMQF, and LWVI…LGLV. Over residues 916 to 927 the composition is skewed to basic and acidic residues; that stretch reads KTIPENRPEPEH. The disordered stretch occupies residues 916 to 938; it reads KTIPENRPEPEHLFSGNDSENSE. 2 N-linked (GlcNAc...) asparagine glycosylation sites follow: asparagine 932 and asparagine 949.

It belongs to the anion exchanger (TC 2.A.31) family. In terms of tissue distribution, expressed in kidney and gastrointestinal tract. In kidney, it is highly expressed in the cortex, expressed at intermediate level in the outer medulla and not expressed in the inner medulla. It is expressed in the cecum, while it is absent in other segments of gastrointestinal tract. Highly expressed in the cortical collecting duct (CCD). Expressed in both alpha-intercalated cells and beta-intercalated cells in the CCD (at protein level).

The protein resides in the basolateral cell membrane. It carries out the reaction 2 hydrogencarbonate(out) + chloride(in) + Na(+)(out) = 2 hydrogencarbonate(in) + chloride(out) + Na(+)(in). The catalysed reaction is K(+)(in) + 2 hydrogencarbonate(in) + chloride(out) = K(+)(out) + 2 hydrogencarbonate(out) + chloride(in). It catalyses the reaction Li(+)(in) + 2 hydrogencarbonate(in) + chloride(out) = Li(+)(out) + 2 hydrogencarbonate(out) + chloride(in). The enzyme catalyses Rb(+)(in) + 2 hydrogencarbonate(in) + chloride(out) = Rb(+)(out) + 2 hydrogencarbonate(out) + chloride(in). It carries out the reaction Cs(+)(in) + 2 hydrogencarbonate(in) + chloride(out) = Cs(+)(out) + 2 hydrogencarbonate(out) + chloride(in). Its activity is regulated as follows. 4,4'-diisothiocyanatodihydrostilbene-2,2'- disulfonic acid (H2DIDS) potently inhibits chloride/hydrogencarbonate antiporter activity with 50% inhibition at about 5 uM. Completely inhibits chloride/hydrogencarbonate antiporter activity at 200 uM of 4,4'-diisothiocyano-trans-stilbene-2,2'-disulfonic acid (DIDS). Its function is as follows. Electroneutral Cl(-)/HCO3(-) antiporter that favors chloride ion entry and efflux of hydrogencarbonate and sodium ion across the basolateral membrane and may participate in salivary secretion. Also mediates Cl(-)/HCO3(-) exchange activity in the presence of K(+) as well as Cs(+), Li(+), and Rb(+). Does not contribute to Cl(-)/HCO3(-) exchanger in the apical membrane of the upper villous epithelium. The protein is Anion exchange protein 4 of Rattus norvegicus (Rat).